We begin with the raw amino-acid sequence, 137 residues long: Acidic phospholipase A2 CC-PLA2-1 (137 aa).

An N-terminal signal peptide occupies residues 1 to 16 (MRTLWIVAVWLMGVEG). Cystine bridges form between cysteine 42–cysteine 130, cysteine 44–cysteine 60, cysteine 59–cysteine 110, cysteine 65–cysteine 137, cysteine 66–cysteine 103, cysteine 73–cysteine 96, and cysteine 90–cysteine 101. Residues tyrosine 43, glycine 45, and glycine 47 each contribute to the Ca(2+) site. The active site involves histidine 63. Aspartate 64 contacts Ca(2+). Aspartate 104 is an active-site residue.

This sequence belongs to the phospholipase A2 family. Group II subfamily. D49 sub-subfamily. The cofactor is Ca(2+). Glycosylated (2.5%). As to expression, expressed by the venom gland.

The protein resides in the secreted. The enzyme catalyses a 1,2-diacyl-sn-glycero-3-phosphocholine + H2O = a 1-acyl-sn-glycero-3-phosphocholine + a fatty acid + H(+). Snake venom phospholipase A2 (PLA2) that inhibits blood coagulation and platelet aggregation induced by ADP and arachidonic acid. Inhibits tumor cell adhesion and migration in a dose-dependent manner. Abolishes the attachment of human brain microvascular endothelial cells (HBMEC) to fibrinogen (IC(50)=0.12 uM) and dramatically reduces its adhesion to fibronectin (IC(50)=0.12 uM), whereas no effect is observed on type I collagen, vitronectin or laminin 1. Also blocks the cell migration toward fibronectin and fibrinogen. These effects are not dependent of the catalytic activity, but are mediated by alpha-5/beta-1 (ITGA5/ITGB1) and alpha-v-containing (ITGAV) integrins. Also shows anti-angiogenic activity in chicken chorioallantoix membrane assay. Has a relatively high enzymatic activity. PLA2 catalyzes the calcium-dependent hydrolysis of the 2-acyl groups in 3-sn-phosphoglycerides. The polypeptide is Acidic phospholipase A2 CC-PLA2-1 (Cerastes cerastes (Horned desert viper)).